The primary structure comprises 454 residues: UPF0210 protein Blon_2054/BLIJ_2131 (454 aa).

The protein belongs to the UPF0210 family. As to quaternary structure, homodimer.

The protein is UPF0210 protein Blon_2054/BLIJ_2131 of Bifidobacterium longum subsp. infantis (strain ATCC 15697 / DSM 20088 / JCM 1222 / NCTC 11817 / S12).